The sequence spans 294 residues: 33 kDa chaperonin (294 aa).

2 cysteine pairs are disulfide-bonded: Cys-239–Cys-241 and Cys-272–Cys-275.

It belongs to the HSP33 family. Post-translationally, under oxidizing conditions two disulfide bonds are formed involving the reactive cysteines. Under reducing conditions zinc is bound to the reactive cysteines and the protein is inactive.

The protein localises to the cytoplasm. Redox regulated molecular chaperone. Protects both thermally unfolding and oxidatively damaged proteins from irreversible aggregation. Plays an important role in the bacterial defense system toward oxidative stress. The protein is 33 kDa chaperonin of Listeria welshimeri serovar 6b (strain ATCC 35897 / DSM 20650 / CCUG 15529 / CIP 8149 / NCTC 11857 / SLCC 5334 / V8).